The sequence spans 123 residues: Large ribosomal subunit protein bL12 (123 aa).

It belongs to the bacterial ribosomal protein bL12 family. In terms of assembly, homodimer. Part of the ribosomal stalk of the 50S ribosomal subunit. Forms a multimeric L10(L12)X complex, where L10 forms an elongated spine to which 2 to 4 L12 dimers bind in a sequential fashion. Binds GTP-bound translation factors.

In terms of biological role, forms part of the ribosomal stalk which helps the ribosome interact with GTP-bound translation factors. Is thus essential for accurate translation. The protein is Large ribosomal subunit protein bL12 of Geobacillus thermodenitrificans (strain NG80-2).